A 309-amino-acid polypeptide reads, in one-letter code: Mitochondrial substrate carrier family protein ancA (309 aa).

Solcar repeat units follow at residues 10 to 102 (SSFV…YKKF), 114 to 203 (KFFI…AKGI), and 216 to 299 (ASWG…IQKL). 5 consecutive transmembrane segments (helical) span residues 12-41 (FVKD…LLLQ), 79-103 (LANV…KKFF), 113-133 (TKFF…SLLF), 181-201 (VSVG…DTAK), and 215-235 (WASW…SYPF). ADP is bound by residues R84 and K96. R239 provides a ligand contact to ADP. The important for transport activity stretch occupies residues 239–244 (RRRMMM). The Nucleotide carrier signature motif motif lies at 239–244 (RRRMMM). Residues 276 to 293 (ALSNAIRGSGGALVLVIY) traverse the membrane as a helical segment.

It belongs to the mitochondrial carrier (TC 2.A.29) family. In terms of assembly, monomer.

The protein localises to the mitochondrion inner membrane. It carries out the reaction ADP(in) + ATP(out) = ADP(out) + ATP(in). Its activity is regulated as follows. The matrix-open state (m-state) is inhibited by the membrane-permeable bongkrekic acid (BKA). The cytoplasmic-open state (c-state) is inhibited by the membrane-impermeable toxic inhibitor carboxyatractyloside (CATR). Functionally, ADP:ATP antiporter that mediates import of ADP into the mitochondrial matrix for ATP synthesis, and export of ATP out to fuel the cell. Cycles between the cytoplasmic-open state (c-state) and the matrix-open state (m-state): operates by the alternating access mechanism with a single substrate-binding site intermittently exposed to either the cytosolic (c-state) or matrix (m-state) side of the inner mitochondrial membrane. This chain is Mitochondrial substrate carrier family protein ancA (ancA), found in Dictyostelium discoideum (Social amoeba).